Reading from the N-terminus, the 89-residue chain is Small ribosomal subunit protein uS15c (89 aa).

This sequence belongs to the universal ribosomal protein uS15 family. Part of the 30S ribosomal subunit.

It localises to the plastid. The protein localises to the organellar chromatophore. In Paulinella chromatophora, this protein is Small ribosomal subunit protein uS15c (rps15).